The primary structure comprises 365 residues: Peptide chain release factor 2 (365 aa).

Gln-252 carries the N5-methylglutamine modification.

This sequence belongs to the prokaryotic/mitochondrial release factor family. In terms of processing, methylated by PrmC. Methylation increases the termination efficiency of RF2.

Its subcellular location is the cytoplasm. Its function is as follows. Peptide chain release factor 2 directs the termination of translation in response to the peptide chain termination codons UGA and UAA. This Acidithiobacillus ferrooxidans (strain ATCC 23270 / DSM 14882 / CIP 104768 / NCIMB 8455) (Ferrobacillus ferrooxidans (strain ATCC 23270)) protein is Peptide chain release factor 2.